The primary structure comprises 707 residues: Elongation factor G 2 (707 aa).

Residues 8 to 290 (ERYRNIGISA…AVIDYLPSPA (283 aa)) enclose the tr-type G domain. GTP is bound by residues 17 to 24 (AHIDAGKT), 88 to 92 (DTPGH), and 142 to 145 (NKMD).

This sequence belongs to the TRAFAC class translation factor GTPase superfamily. Classic translation factor GTPase family. EF-G/EF-2 subfamily.

The protein resides in the cytoplasm. In terms of biological role, catalyzes the GTP-dependent ribosomal translocation step during translation elongation. During this step, the ribosome changes from the pre-translocational (PRE) to the post-translocational (POST) state as the newly formed A-site-bound peptidyl-tRNA and P-site-bound deacylated tRNA move to the P and E sites, respectively. Catalyzes the coordinated movement of the two tRNA molecules, the mRNA and conformational changes in the ribosome. In Bordetella bronchiseptica (strain ATCC BAA-588 / NCTC 13252 / RB50) (Alcaligenes bronchisepticus), this protein is Elongation factor G 2.